The sequence spans 143 residues: Ribonuclease H (143 aa).

The region spanning 1–136 (MQEIEIFCDG…CDSLAKLEAQ (136 aa)) is the RNase H type-1 domain. Mg(2+) is bound by residues D9, E47, D69, and D128.

It belongs to the RNase H family. Monomer. Mg(2+) is required as a cofactor.

It localises to the cytoplasm. The catalysed reaction is Endonucleolytic cleavage to 5'-phosphomonoester.. In terms of biological role, endonuclease that specifically degrades the RNA of RNA-DNA hybrids. The protein is Ribonuclease H of Helicobacter pylori (strain HPAG1).